The primary structure comprises 150 residues: Large ribosomal subunit protein bL9 (150 aa).

It belongs to the bacterial ribosomal protein bL9 family.

Functionally, binds to the 23S rRNA. This chain is Large ribosomal subunit protein bL9, found in Streptococcus equi subsp. zooepidemicus (strain MGCS10565).